Consider the following 213-residue polypeptide: Golgi apparatus membrane protein TVP23 homolog A (213 aa).

4 helical membrane passes run 32 to 52 (PLAT…YVSC), 54 to 74 (WFSK…SLDF), 123 to 143 (IFWL…FSTL), and 150 to 170 (WLAL…GYIL).

This sequence belongs to the TVP23 family.

The protein resides in the membrane. The chain is Golgi apparatus membrane protein TVP23 homolog A (TVP23A) from Homo sapiens (Human).